A 349-amino-acid chain; its full sequence is S-adenosylmethionine:tRNA ribosyltransferase-isomerase (349 aa).

Belongs to the QueA family. As to quaternary structure, monomer.

Its subcellular location is the cytoplasm. The catalysed reaction is 7-aminomethyl-7-carbaguanosine(34) in tRNA + S-adenosyl-L-methionine = epoxyqueuosine(34) in tRNA + adenine + L-methionine + 2 H(+). It participates in tRNA modification; tRNA-queuosine biosynthesis. Transfers and isomerizes the ribose moiety from AdoMet to the 7-aminomethyl group of 7-deazaguanine (preQ1-tRNA) to give epoxyqueuosine (oQ-tRNA). The polypeptide is S-adenosylmethionine:tRNA ribosyltransferase-isomerase (Parabacteroides distasonis (strain ATCC 8503 / DSM 20701 / CIP 104284 / JCM 5825 / NCTC 11152)).